The chain runs to 276 residues: Protein TabB (276 aa).

It belongs to the transferase hexapeptide repeat family. The cofactor is pyridoxal 5'-phosphate.

The polypeptide is Protein TabB (tabB) (Pseudomonas amygdali pv. tabaci (Pseudomonas syringae pv. tabaci)).